The following is a 444-amino-acid chain: Protein Z-dependent protease inhibitor (444 aa).

The N-terminal stretch at 1–21 (MKVVPSLLLSVLLAQVWLVPG) is a signal peptide. Residues 24-65 (PSPQSPETPAPQNQTSRVVQAPKEEEEDEQEASEEKASEEEK) form a disordered region. An N-linked (GlcNAc...) asparagine glycan is attached at N36. S56 bears the Phosphoserine; by FAM20C mark. Basic and acidic residues predominate over residues 56–65 (SEEKASEEEK). The interval 136-153 (TKPGLLPSLFKGLRETLS) is heparin-binding. Residues N180, N197, and N295 are each glycosylated (N-linked (GlcNAc...) asparagine).

This sequence belongs to the serpin family. Interacts with PROZ. Post-translationally, phosphorylated by FAM20C in the extracellular medium. As to expression, expressed by the liver and secreted in plasma.

The protein resides in the secreted. Its function is as follows. Inhibits activity of the coagulation protease factor Xa in the presence of PROZ, calcium and phospholipids. Also inhibits factor XIa in the absence of cofactors. The polypeptide is Protein Z-dependent protease inhibitor (SERPINA10) (Homo sapiens (Human)).